A 202-amino-acid chain; its full sequence is uncharacterized protein (202 aa).

This is an uncharacterized protein from Saccharomyces cerevisiae (strain ATCC 204508 / S288c) (Baker's yeast).